Consider the following 26-residue polypeptide: DEAD-box ATP-dependent RNA helicase 1 (26 aa).

The Q motif motif lies at 1-10; that stretch reads RELLMGIFEK. 11–16 lines the ATP pocket; sequence NGTGKT. Residues 11–26 form the Helicase ATP-binding domain; sequence NGTGKTAAFVIPLLQK.

Belongs to the DEAD box helicase family. DDX6/DHH1 subfamily.

It is found in the cytoplasm. The protein localises to the P-body. It catalyses the reaction ATP + H2O = ADP + phosphate + H(+). Its function is as follows. ATP-dependent RNA helicase involved in mRNA turnover, and more specifically in mRNA decapping. This chain is DEAD-box ATP-dependent RNA helicase 1, found in Catharanthus roseus (Madagascar periwinkle).